The sequence spans 436 residues: F-box/LRR-repeat protein 20 (436 aa).

Residues 22-68 form the F-box domain; it reads AVINKKLPKELLLRIFSFLDVVTLCRCAQVSRAWNVLALDGSNWQRI. 13 LRR repeats span residues 74–100, 101–126, 127–152, 153–178, 179–204, 205–230, 231–256, 257–282, 283–308, 309–334, 335–363, 364–388, and 389–414; these read QRDI…SLRG, CLGV…SLNG, CTKT…DLAS, CTSI…NISW, CDQV…FLKG, CTQL…NLQT, CLQI…CASG, CSNI…EVAR, CSQL…DLEE, CVQI…SLSH, CELI…ELDN, CPLI…ELYD, and CQQI…AYFA. T417 is subject to Phosphothreonine. Phosphoserine is present on S421.

As to quaternary structure, interacts with SKP1 and CUL1. In terms of tissue distribution, highly expressed in brain.

It localises to the cytoplasm. Functionally, substrate-recognition component of the SCF (SKP1-CUL1-F-box protein)-type E3 ubiquitin ligase complex. Isoform 3 regulates neural transmission by binding and ubiquitinating RIMS1, a modulator of presynaptic plasticity. This chain is F-box/LRR-repeat protein 20 (Fbxl20), found in Mus musculus (Mouse).